The primary structure comprises 434 residues: MQVSVEATQGLERRLTISVPAEQIEKLVKDSLQREAKRARIPGFRPGKVPITVINKRYGAAIRQDIMGEVMQRNFIEAIIAEKLNPAGAPTFVPGSTDGEKFEFIATFEIYPEVELKGLDAIEVEQPKAEVTDADVDTMIETLRKQHATFAAVEREAADGDKVKMNFVGSVDGEEFEGGKADDFELQLGSGRMIPGFEAGILGHKAGEEFVIDVNFPEEYHAENLKGKAAKFAITLTEVQAANLPEVNDEFAALFGISEGGLEALKAEIRKNMNRELEQALKANVKEQVINGLLANNDITLPKALIDGEVNVLRQQAMQRFGNQTANMPELPAELFTEQAARRVKIGLLLGEVIKTNELKAEDERVQGLIASMASAYEDPSEVVAYYNSNKELMQNMRNVALEEQAVEALLKSAKVTEKEVAFEEFMNKATGRA.

Positions 160–245 (GDKVKMNFVG…LTEVQAANLP (86 aa)) constitute a PPIase FKBP-type domain.

The protein belongs to the FKBP-type PPIase family. Tig subfamily.

The protein resides in the cytoplasm. The enzyme catalyses [protein]-peptidylproline (omega=180) = [protein]-peptidylproline (omega=0). Functionally, involved in protein export. Acts as a chaperone by maintaining the newly synthesized protein in an open conformation. Functions as a peptidyl-prolyl cis-trans isomerase. In Shewanella baltica (strain OS223), this protein is Trigger factor.